The sequence spans 320 residues: MSSCNFTHATFLLIGIPGLEEAHFWFGFPLLSMYAVALFGNCIVVFIVRTERSLHAPMYLFLCMLAAIDLALSTSTMPKILALFWFDSREITFDACLAQMFFIHTLSAIESTILLAMAFDRYVAICHPLRHAAVLNNTVTVQIGMVALVRGSLFFFPLPLLIKRLAFCHSNVLSHSYCVHQDVMKLAYTDTLPNVVYGLTAILLVMGVDVMFISLSYFLIIRTVLQLPSKSERAKAFGTCVSHISVVLAFYVPLIGLSVVHRFGNSLDPIVHVLMGDVYLLLPPVINPIIYGAKTKQIRTRVLAMFKISCDKDIEAGGNT.

Residues 1–27 are Extracellular-facing; the sequence is MSSCNFTHATFLLIGIPGLEEAHFWFG. Residue N5 is glycosylated (N-linked (GlcNAc...) asparagine). The chain crosses the membrane as a helical span at residues 28–48; the sequence is FPLLSMYAVALFGNCIVVFIV. Over 49 to 53 the chain is Cytoplasmic; that stretch reads RTERS. The helical transmembrane segment at 54–74 threads the bilayer; sequence LHAPMYLFLCMLAAIDLALST. Residues 75 to 98 are Extracellular-facing; the sequence is STMPKILALFWFDSREITFDACLA. A disulfide bond links C96 and C178. A helical membrane pass occupies residues 99-119; the sequence is QMFFIHTLSAIESTILLAMAF. The Cytoplasmic segment spans residues 120–141; the sequence is DRYVAICHPLRHAAVLNNTVTV. The chain crosses the membrane as a helical span at residues 142-162; sequence QIGMVALVRGSLFFFPLPLLI. The Extracellular segment spans residues 163 to 200; that stretch reads KRLAFCHSNVLSHSYCVHQDVMKLAYTDTLPNVVYGLT. A helical transmembrane segment spans residues 201–221; the sequence is AILLVMGVDVMFISLSYFLII. Over 222 to 239 the chain is Cytoplasmic; sequence RTVLQLPSKSERAKAFGT. Residues 240 to 260 traverse the membrane as a helical segment; it reads CVSHISVVLAFYVPLIGLSVV. Residues 261–269 lie on the Extracellular side of the membrane; sequence HRFGNSLDP. The chain crosses the membrane as a helical span at residues 270 to 290; the sequence is IVHVLMGDVYLLLPPVINPII. The Cytoplasmic portion of the chain corresponds to 291 to 320; sequence YGAKTKQIRTRVLAMFKISCDKDIEAGGNT.

Belongs to the G-protein coupled receptor 1 family. In terms of tissue distribution, in brain, expressed in medulla oblongata by cells close to the fourth ventricle, in the area postrema, the nucleus tractus solitarius. Expressed in olfactory epithelium and vomeronasal organ. Expressed in kidney by large renal vessels, renal afferent arterioles, and extrarenal vascular beds. In small resistance vessels the expression is restricted to cells of the juxtaglomerular afferent arteriole, which mediate renin secretion. Also detected in small blood vessels in a variety of tissues including heart, diaphragm, skeletal muscle, and skin. In the heart, esophagus, and stomach it is detected in axons of autonomic neurons and neurons of the enteric plexus. Also detected in colon and liver. Expressed in the glomus cells of the carotid body.

It is found in the cell membrane. Its subcellular location is the early endosome membrane. Functionally, olfactory receptor. The activity of this receptor is probably mediated by G-proteins which induce elevation of intracellular Ca(2+), cAMP and activation of phosphorylation of the protein kinases PKA and MAPK3/MAPK1. Activation of OR51E2 may affect melanocyte proliferation, differentiation, and melanogenesis and may increase proliferation and migration of primary retinal pigment epithelial (RPE) cells. Activated by the short chain fatty acids (SCFA), acetate and propionate. In response to SCFA, may positively regulate renin secretion and increase blood pressure. May also be activated by steroid hormones and regulate cell proliferation. Activated by L-lactate in glomus cells. The chain is Olfactory receptor 51E2 (Or51e2) from Mus musculus (Mouse).